The chain runs to 374 residues: Alcohol dehydrogenase class-3 (374 aa).

Alanine 2 carries the post-translational modification N-acetylalanine. Residues cysteine 45, histidine 67, cysteine 97, cysteine 100, cysteine 103, cysteine 111, and cysteine 174 each contribute to the Zn(2+) site. Lysine 233 carries the post-translational modification N6-succinyllysine. Serine 247 is modified (phosphoserine). N6-succinyllysine is present on lysine 315. Serine 324 and serine 351 each carry phosphoserine.

Belongs to the zinc-containing alcohol dehydrogenase family. Class-III subfamily. In terms of assembly, homodimer. Zn(2+) serves as cofactor.

It is found in the cytoplasm. The catalysed reaction is a primary alcohol + NAD(+) = an aldehyde + NADH + H(+). It catalyses the reaction a secondary alcohol + NAD(+) = a ketone + NADH + H(+). The enzyme catalyses S-(hydroxymethyl)glutathione + NADP(+) = S-formylglutathione + NADPH + H(+). It carries out the reaction S-(hydroxymethyl)glutathione + NAD(+) = S-formylglutathione + NADH + H(+). The catalysed reaction is 20-oxo-(5Z,8Z,11Z,14Z)-eicosatetraenoate + NAD(+) + H2O = (5Z,8Z,11Z,14Z)-eicosatetraenedioate + NADH + 2 H(+). It catalyses the reaction 20-hydroxy-(5Z,8Z,11Z,14Z)-eicosatetraenoate + NAD(+) = 20-oxo-(5Z,8Z,11Z,14Z)-eicosatetraenoate + NADH + H(+). The enzyme catalyses S-nitrosoglutathione + NADH + H(+) = S-(hydroxysulfenamide)glutathione + NAD(+). In terms of biological role, catalyzes the oxidation of long-chain primary alcohols and the oxidation of S-(hydroxymethyl) glutathione. Also oxidizes long chain omega-hydroxy fatty acids, such as 20-HETE, producing both the intermediate aldehyde, 20-oxoarachidonate and the end product, a dicarboxylic acid, (5Z,8Z,11Z,14Z)-eicosatetraenedioate. Class-III ADH is remarkably ineffective in oxidizing ethanol. Required for clearance of cellular formaldehyde, a cytotoxic and carcinogenic metabolite that induces DNA damage. Also acts as a S-nitroso-glutathione reductase by catalyzing the NADH-dependent reduction of S-nitrosoglutathione, thereby regulating protein S-nitrosylation. The sequence is that of Alcohol dehydrogenase class-3 from Homo sapiens (Human).